The primary structure comprises 575 residues: CCR4-NOT transcription complex subunit 4 (575 aa).

The RING-type; degenerate zinc-finger motif lies at 14-57 (CPLCMEPLEIDDINFFPCTCGYQICRFCWHRIRTDENGLCPACR). Positions 68–104 (KPLSQEELQRIKNEKKQKQNERKQKISENRKHLASVR) form a coiled coil. Serine 71 bears the Phosphoserine mark. The RRM domain maps to 109–189 (NLVFVVGLSQ…VVDGRTLKAS (81 aa)). Residues 190 to 217 (LGTTKYCSYFLKNMQCPKPDCMYLHELG) form a C3H1-type zinc finger. Disordered regions lie at residues 256 to 372 (TGSV…EPQS) and 424 to 458 (SVQD…HPAA). A compositionally biased stretch (polar residues) spans 281 to 299 (DSLSIGNGDNSQQISNSDT). A Phosphoserine modification is found at serine 301. A compositionally biased stretch (polar residues) spans 307-322 (SKSNPVIPISSSNHSA). Serine 324 is subject to Phosphoserine. The segment covering 345-356 (NPIPSGLPPFPS) has biased composition (pro residues). The span at 428 to 441 (QPSLSPTSLQNSSS) shows a compositional bias: low complexity. A Phosphoserine modification is found at serine 432. An asymmetric dimethylarginine mark is found at arginine 475 and arginine 483. At serine 490 the chain carries Phosphoserine. An Asymmetric dimethylarginine modification is found at arginine 497. The segment at 553–575 (PLSTSSHSLQQGQQPTSLHTTVA) is disordered.

Interacts with CNOT1 via its C-terminus but does not stably associate with the CCR4-NOT complex. Interacts (via RING domain) with UBE2D2. Interacts with ABCE1, PINK1 and PELO. Autoubiquitinated.

The protein localises to the cytoplasm. It is found in the nucleus. It carries out the reaction S-ubiquitinyl-[E2 ubiquitin-conjugating enzyme]-L-cysteine + [acceptor protein]-L-lysine = [E2 ubiquitin-conjugating enzyme]-L-cysteine + N(6)-ubiquitinyl-[acceptor protein]-L-lysine.. It participates in protein modification; protein ubiquitination. In terms of biological role, has E3 ubiquitin ligase activity, promoting ubiquitination and degradation of target proteins. Involved in activation of the JAK/STAT pathway. Catalyzes ubiquitination of methylated RBM15. Plays a role in quality control of translation of mitochondrial outer membrane-localized mRNA. As part of the PINK1-regulated signaling, upon mitochondria damage, ubiquitinates ABCE1 and thereby recruits autophagy receptors to the mitochondrial outer membrane to initiate mitophagy. The protein is CCR4-NOT transcription complex subunit 4 (CNOT4) of Homo sapiens (Human).